The primary structure comprises 38 residues: MHREGIGGWKKRIPSVSKRKTKCLTHRQMTSSFFLVFA.

This is an uncharacterized protein from Saccharomyces cerevisiae (strain ATCC 204508 / S288c) (Baker's yeast).